The chain runs to 787 residues: Pyridoxal-dependent decarboxylase domain-containing protein 1 (787 aa).

The span at 29 to 41 (EDSQRRTEEENGK) shows a compositional bias: basic and acidic residues. The segment at 29 to 52 (EDSQRRTEEENGKKLLSGDIPGPL) is disordered. Residue serine 653 is modified to Phosphoserine. The disordered stretch occupies residues 683 to 787 (QGSGVTPPQT…PQVEEPESLR (105 aa)). The segment covering 685–697 (SGVTPPQTPTGTR) has biased composition (polar residues). Threonine 688 and threonine 692 each carry phosphothreonine. Serine 711, serine 719, and serine 723 each carry phosphoserine. Positions 735 to 745 (QSSGGQEASEA) are enriched in polar residues. 2 positions are modified to phosphoserine: serine 747 and serine 785. Basic and acidic residues predominate over residues 774 to 787 (QDDRPQVEEPESLR).

It belongs to the group II decarboxylase family. Pyridoxal 5'-phosphate serves as cofactor.

The sequence is that of Pyridoxal-dependent decarboxylase domain-containing protein 1 (PDXDC1) from Bos taurus (Bovine).